The primary structure comprises 225 residues: Tryptophan synthase beta chain (225 aa).

It belongs to the TrpB family. In terms of assembly, tetramer of two alpha and two beta chains. Pyridoxal 5'-phosphate serves as cofactor.

It catalyses the reaction (1S,2R)-1-C-(indol-3-yl)glycerol 3-phosphate + L-serine = D-glyceraldehyde 3-phosphate + L-tryptophan + H2O. It functions in the pathway amino-acid biosynthesis; L-tryptophan biosynthesis; L-tryptophan from chorismate: step 5/5. In terms of biological role, the beta subunit is responsible for the synthesis of L-tryptophan from indole and L-serine. The sequence is that of Tryptophan synthase beta chain (trpB) from Buchnera aphidicola subsp. Rhopalosiphum padi.